The primary structure comprises 271 residues: Urease accessory protein UreD (271 aa).

This sequence belongs to the UreD family. As to quaternary structure, ureD, UreF and UreG form a complex that acts as a GTP-hydrolysis-dependent molecular chaperone, activating the urease apoprotein by helping to assemble the nickel containing metallocenter of UreC. The UreE protein probably delivers the nickel.

Its subcellular location is the cytoplasm. Required for maturation of urease via the functional incorporation of the urease nickel metallocenter. The polypeptide is Urease accessory protein UreD (Halalkalibacterium halodurans (strain ATCC BAA-125 / DSM 18197 / FERM 7344 / JCM 9153 / C-125) (Bacillus halodurans)).